A 444-amino-acid chain; its full sequence is Maturase K (444 aa).

Belongs to the intron maturase 2 family. MatK subfamily.

The protein resides in the plastid. The protein localises to the chloroplast. In terms of biological role, usually encoded in the trnK tRNA gene intron. Probably assists in splicing its own and other chloroplast group II introns. This is Maturase K from Chamaecyparis lawsoniana (Lawson false cypress).